The primary structure comprises 375 residues: Probable disease resistance protein At1g52660 (375 aa).

The 215-residue stretch at 158–372 (ENTGIIGLYG…LSNSPPNFSG (215 aa)) folds into the NB-ARC domain. 167–174 (GVEGVGKT) contributes to the ATP binding site.

Its function is as follows. Possible disease resistance protein. The protein is Probable disease resistance protein At1g52660 of Arabidopsis thaliana (Mouse-ear cress).